The chain runs to 124 residues: MYFFIKTINKYLYKLIYSFIVFYQKIISPILPARCRYYPTCSNYGKQALAWYGVWNGSLLLLKRIGRCHPLGGHGIDFVPLPLASYHYQHVSLIMSACMKAQGLYVYRDNNGYVARLNHMMKLT.

It belongs to the UPF0161 family.

The protein resides in the cell inner membrane. Could be involved in insertion of integral membrane proteins into the membrane. The chain is Putative membrane protein insertion efficiency factor from Psychrobacter arcticus (strain DSM 17307 / VKM B-2377 / 273-4).